We begin with the raw amino-acid sequence, 126 residues long: uncharacterized protein (126 aa).

Residues 1-27 (MSKSKTPNFDDMEVLDDTNDEYDDSES) are disordered. The span at 10–27 (DDMEVLDDTNDEYDDSES) shows a compositional bias: acidic residues.

This is an uncharacterized protein from Halorubrum sp. PV6 (HRPV-1).